A 72-amino-acid chain; its full sequence is Rubredoxin in uptake hydrogenase operon (72 aa).

The Rubredoxin-like domain occupies 19-70 (DAVLECKICWHRYDPAVGDEVWQILAGTPFAALPAHWRCPQCDGDREQFMVV). Positions 24, 27, 57, and 60 each coordinate Fe cation.

It belongs to the rubredoxin family. It depends on Fe(3+) as a cofactor.

Its function is as follows. Could be an electron transport intermediate in hydrogen oxidation. This is Rubredoxin in uptake hydrogenase operon (hupR) from Azotobacter chroococcum mcd 1.